Consider the following 729-residue polypeptide: MLYKGDTLYLDWLEDGIAELVFDAPGSVNKLDTATVASLGQALEVLEKQHDLKGLLLRSNKAAFIVGADITEFLSLFLVPEEQLSQWLHFANSVFNRLEDLPVPTLAAVNGYALGGGCECVLATDYRLATPDLRIGLPETKLGIMPGFGGSVRLPRMLGADSALEIIAAGKDVGAEHALKIGLVDGVVKQETLIEGAIAVLRQAITGDLDWRAKRQPKLEPLKLSKIEAAMSFTIAKGMVAQTAGKHYPAPMTAVKTIEAAARFGREEALNLENKSFVPLAHTNEARALVGIFLNDQYVKGKAKKLTKDIETPKQAAVLGAGIMGGGIAYQSAWKGVPVIMKDINDKSLNLGMTEAAKLLNKQLERGKIDGLKLAGVISTIHPTLDYAGFDRVDVVVEAVVENPKVKKAVLAETEQKVRPETVLASNTSTIPIGELASALEHPENFCGMHFFNPVHRMPLVEIIRGEKSSDETIAKVVAWASKMGKTPIVVNDCPGFFVNRVLFPYFAGFSQLLRDGADFRKVDKVMEKQFGWPMGPAYLLDVVGIDTAHHAQAVMAAGFPQRMQKEYRDAIDALFDASRFGQKNGLGFWRYKEDSKGKPKKEEDAAVDDLLASVSQPKHDFSDDEIIARMMIPMINEVVRCLEEGIIASPAEADMALVYGLGFPPFHGGAFRWLDTQGSAKYLDMAQQYQHLGPLYEVPEGLRNKARHNEPYYPPVEPARPVGSLKTA.

Positions 1–189 (MLYKGDTLYL…KIGLVDGVVK (189 aa)) are enoyl-CoA hydratase/isomerase. Aspartate 296 is a substrate binding site. Residues 311–729 (ETPKQAAVLG…ARPVGSLKTA (419 aa)) form a 3-hydroxyacyl-CoA dehydrogenase region. NAD(+)-binding positions include methionine 324, aspartate 343, 400–402 (VVE), lysine 407, and serine 429. Catalysis depends on histidine 450, which acts as the For 3-hydroxyacyl-CoA dehydrogenase activity. An NAD(+)-binding site is contributed by asparagine 453. Residues asparagine 500 and tyrosine 660 each coordinate substrate. Positions 708-729 (RHNEPYYPPVEPARPVGSLKTA) are disordered.

The protein in the N-terminal section; belongs to the enoyl-CoA hydratase/isomerase family. This sequence in the C-terminal section; belongs to the 3-hydroxyacyl-CoA dehydrogenase family. Heterotetramer of two alpha chains (FadB) and two beta chains (FadA).

It catalyses the reaction a (3S)-3-hydroxyacyl-CoA + NAD(+) = a 3-oxoacyl-CoA + NADH + H(+). The catalysed reaction is a (3S)-3-hydroxyacyl-CoA = a (2E)-enoyl-CoA + H2O. The enzyme catalyses a 4-saturated-(3S)-3-hydroxyacyl-CoA = a (3E)-enoyl-CoA + H2O. It carries out the reaction (3S)-3-hydroxybutanoyl-CoA = (3R)-3-hydroxybutanoyl-CoA. It catalyses the reaction a (3Z)-enoyl-CoA = a 4-saturated (2E)-enoyl-CoA. The catalysed reaction is a (3E)-enoyl-CoA = a 4-saturated (2E)-enoyl-CoA. The protein operates within lipid metabolism; fatty acid beta-oxidation. Involved in the aerobic and anaerobic degradation of long-chain fatty acids via beta-oxidation cycle. Catalyzes the formation of 3-oxoacyl-CoA from enoyl-CoA via L-3-hydroxyacyl-CoA. It can also use D-3-hydroxyacyl-CoA and cis-3-enoyl-CoA as substrate. In Salmonella newport (strain SL254), this protein is Fatty acid oxidation complex subunit alpha.